Here is a 390-residue protein sequence, read N- to C-terminus: Matrix metalloproteinase-23 (390 aa).

Residues 1 to 19 (MGRGARVPSEAPGAGVERR) are Cytoplasmic-facing. Residues 1–78 (MGRGARVPSE…PGPLAPRRRR (78 aa)) constitute a propeptide that is removed on maturation. The chain crosses the membrane as a helical; Signal-anchor for type II membrane protein span at residues 20-40 (WLGAALVALCLLPALVLLARL). Residues 41–390 (GAPAVPAWSA…TYSWRVRVRG (350 aa)) lie on the Lumenal side of the membrane. N-linked (GlcNAc...) asparagine glycans are attached at residues Asn92 and Asn148. Residue His211 coordinates Zn(2+). Glu212 is a catalytic residue. Residues His215 and His221 each coordinate Zn(2+). Residue Asn232 is glycosylated (N-linked (GlcNAc...) asparagine). Residues 255 to 289 (CLDRLFVCASWARRGFCDARRRLMKRLCPSSCDFC) enclose the ShKT domain. Intrachain disulfides connect Cys255–Cys289, Cys262–Cys282, and Cys271–Cys286. Residues 295–380 (PTVATTPPPP…VVRRQQRVLT (86 aa)) form the Ig-like C2-type domain. N-linked (GlcNAc...) asparagine glycosylation occurs at Asn316. Cysteines 321 and 370 form a disulfide.

Belongs to the peptidase M10A family. It depends on Zn(2+) as a cofactor. N-glycosylated. In terms of processing, proteolytic cleavage might yield an active form. As to expression, predominantly expressed in ovary, testis and prostate.

It is found in the endoplasmic reticulum membrane. The protein localises to the membrane. Inhibited by TIMP2. In terms of biological role, protease. May regulate the surface expression of some potassium channels by retaining them in the endoplasmic reticulum. This is Matrix metalloproteinase-23 (MMP23B) from Homo sapiens (Human).